A 356-amino-acid chain; its full sequence is sn-glycerol-3-phosphate import ATP-binding protein UgpC (356 aa).

The ABC transporter domain maps to leucine 4 to isoleucine 235. ATP is bound at residue glycine 37–serine 44.

It belongs to the ABC transporter superfamily. sn-glycerol-3-phosphate importer (TC 3.A.1.1.3) family. As to quaternary structure, the complex is composed of two ATP-binding proteins (UgpC), two transmembrane proteins (UgpA and UgpE) and a solute-binding protein (UgpB).

The protein localises to the cell inner membrane. It catalyses the reaction sn-glycerol 3-phosphate(out) + ATP + H2O = sn-glycerol 3-phosphate(in) + ADP + phosphate + H(+). Its function is as follows. Part of the ABC transporter complex UgpBAEC involved in sn-glycerol-3-phosphate (G3P) import. Responsible for energy coupling to the transport system. The chain is sn-glycerol-3-phosphate import ATP-binding protein UgpC from Escherichia coli (strain UTI89 / UPEC).